The following is a 194-amino-acid chain: Peptidyl-tRNA hydrolase (194 aa).

Residue Tyr16 coordinates tRNA. The active-site Proton acceptor is the His21. Positions 67, 69, and 115 each coordinate tRNA.

It belongs to the PTH family. In terms of assembly, monomer.

It is found in the cytoplasm. The enzyme catalyses an N-acyl-L-alpha-aminoacyl-tRNA + H2O = an N-acyl-L-amino acid + a tRNA + H(+). In terms of biological role, hydrolyzes ribosome-free peptidyl-tRNAs (with 1 or more amino acids incorporated), which drop off the ribosome during protein synthesis, or as a result of ribosome stalling. Functionally, catalyzes the release of premature peptidyl moieties from peptidyl-tRNA molecules trapped in stalled 50S ribosomal subunits, and thus maintains levels of free tRNAs and 50S ribosomes. In Salmonella paratyphi B (strain ATCC BAA-1250 / SPB7), this protein is Peptidyl-tRNA hydrolase.